The sequence spans 473 residues: Ribulose bisphosphate carboxylase large chain (473 aa).

Positions 116 and 166 each coordinate substrate. Residue K168 is the Proton acceptor of the active site. A substrate-binding site is contributed by K170. Residues K194, D196, and E197 each coordinate Mg(2+). N6-carboxylysine is present on K194. The active-site Proton acceptor is H287. Substrate-binding residues include R288, H320, and S372.

Belongs to the RuBisCO large chain family. Type I subfamily. Heterohexadecamer of 8 large chains and 8 small chains. It depends on Mg(2+) as a cofactor.

The enzyme catalyses 2 (2R)-3-phosphoglycerate + 2 H(+) = D-ribulose 1,5-bisphosphate + CO2 + H2O. It carries out the reaction D-ribulose 1,5-bisphosphate + O2 = 2-phosphoglycolate + (2R)-3-phosphoglycerate + 2 H(+). Its function is as follows. RuBisCO catalyzes two reactions: the carboxylation of D-ribulose 1,5-bisphosphate, the primary event in carbon dioxide fixation, as well as the oxidative fragmentation of the pentose substrate. Both reactions occur simultaneously and in competition at the same active site. In Rhodobacter capsulatus (strain ATCC BAA-309 / NBRC 16581 / SB1003), this protein is Ribulose bisphosphate carboxylase large chain.